The chain runs to 783 residues: Tricorn protease-interacting factor F2 (783 aa).

Residues Glu-107 and 236 to 240 (GAMEN) contribute to the substrate site. His-271 contributes to the Zn(2+) binding site. Catalysis depends on Glu-272, which acts as the Proton acceptor. Positions 275 and 294 each coordinate Zn(2+).

It belongs to the peptidase M1 family. As to quaternary structure, monomer. Part of the Tricorn proteolytic complex. Zn(2+) serves as cofactor.

It localises to the cytoplasm. In terms of biological role, proteases F1, F2 and F3 degrade oligopeptides produced by Tricorn (themselves probably produced by the proteasome), yielding free amino acids. The chain is Tricorn protease-interacting factor F2 (trf2) from Thermoplasma acidophilum (strain ATCC 25905 / DSM 1728 / JCM 9062 / NBRC 15155 / AMRC-C165).